A 177-amino-acid polypeptide reads, in one-letter code: Centromere protein R (177 aa).

A Glycyl lysine isopeptide (Lys-Gly) (interchain with G-Cter in SUMO2) cross-link involves residue Lys-8. Positions 9–13 (LDGLL) match the LXXLL motif motif. At Ser-17 the chain carries Phosphoserine. Positions 20–50 (PSKITRKKSVITYSPTTGTCQMSLFASPTSS) are DD1. A Glycyl lysine isopeptide (Lys-Gly) (interchain with G-Cter in SUMO2) cross-link involves residue Lys-22. At Ser-28 the chain carries Phosphoserine. Polar residues predominate over residues 41 to 50 (MSLFASPTSS). A disordered region spans residues 41–81 (MSLFASPTSSEEQKHRNGLSNEKRKKLNHPSLTESKESTTK). The short motif at 63–66 (KRKK) is the Nuclear localization signal element. Ser-71 carries the phosphoserine modification. Positions 83 to 113 (NDEFMMLLSKVEKLSEEIMEIMQNLSSIQAL) form a coiled coil. The LXXIL motif signature appears at 172–176 (LKAIL).

Homodimer; mediated by the coiled coil domain. Isoform 3, but not other isoforms, interacts with the cytoplasmic tail of integrin ITGB3. The relevance of the interaction with ITGB3 is however uncertain, since isoform 3 is mainly nuclear. Interacts with CCNA2 and MTA1. Interacts with NFKB1 NF-kappa-B subunit. Component of the CENPA-CAD complex, composed of CENPI, CENPK, CENPL, CENPO, CENPP, CENPQ, CENPR and CENPS. The CENPA-CAD complex interacts with the CENPA-NAC complex, at least composed of CENPA, CENPC, CENPH, CENPM, CENPN, CENPT and CENPU. Interacts with TASOR. Widely expressed. Expressed in spleen, thymus, prostate, ovary, small intestine and white blood cells. Highly expressed in testis and colon. Isoform 4 is expressed in platelets, lymphocytes and granulocytes.

It is found in the nucleus. Its subcellular location is the chromosome. It localises to the centromere. The protein resides in the kinetochore. The protein localises to the cytoplasm. In terms of biological role, transcription coregulator that can have both coactivator and corepressor functions. Isoform 1, but not other isoforms, is involved in the coactivation of nuclear receptors for retinoid X (RXRs) and thyroid hormone (TRs) in a ligand-dependent fashion. In contrast, it does not coactivate nuclear receptors for retinoic acid, vitamin D, progesterone receptor, nor glucocorticoid. Acts as a coactivator for estrogen receptor alpha. Acts as a transcriptional corepressor via its interaction with the NFKB1 NF-kappa-B subunit, possibly by interfering with the transactivation domain of NFKB1. Induces apoptosis in breast cancer cells, but not in other cancer cells, via a caspase-2 mediated pathway that involves mitochondrial membrane permeabilization but does not require other caspases. May also act as an inhibitor of cyclin A-associated kinase. Also acts a component of the CENPA-CAD (nucleosome distal) complex, a complex recruited to centromeres which is involved in assembly of kinetochore proteins, mitotic progression and chromosome segregation. May be involved in incorporation of newly synthesized CENPA into centromeres via its interaction with the CENPA-NAC complex. The polypeptide is Centromere protein R (ITGB3BP) (Homo sapiens (Human)).